The primary structure comprises 183 residues: Threonylcarbamoyl-AMP synthase (183 aa).

The YrdC-like domain occupies 1–183; that stretch reads MNIQQIVEQL…LFTHQLFRQG (183 aa).

It belongs to the SUA5 family. TsaC subfamily.

Its subcellular location is the cytoplasm. The catalysed reaction is L-threonine + hydrogencarbonate + ATP = L-threonylcarbamoyladenylate + diphosphate + H2O. In terms of biological role, required for the formation of a threonylcarbamoyl group on adenosine at position 37 (t(6)A37) in tRNAs that read codons beginning with adenine. Catalyzes the conversion of L-threonine, HCO(3)(-)/CO(2) and ATP to give threonylcarbamoyl-AMP (TC-AMP) as the acyladenylate intermediate, with the release of diphosphate. In Pasteurella multocida (strain Pm70), this protein is Threonylcarbamoyl-AMP synthase.